The primary structure comprises 676 residues: Methionine--tRNA ligase (676 aa).

The 'HIGH' region signature appears at 15 to 25; the sequence is PYANGSIHLGH. 4 residues coordinate Zn(2+): Cys146, Cys149, Cys159, and Cys162. Residues 332–336 carry the 'KMSKS' region motif; sequence KMSKS. Lys335 provides a ligand contact to ATP. The tRNA-binding domain maps to 574-676; the sequence is DFAKVDMRIA…SGAQPGMQVK (103 aa).

The protein belongs to the class-I aminoacyl-tRNA synthetase family. MetG type 1 subfamily. As to quaternary structure, homodimer. Zn(2+) serves as cofactor.

It is found in the cytoplasm. The catalysed reaction is tRNA(Met) + L-methionine + ATP = L-methionyl-tRNA(Met) + AMP + diphosphate. Functionally, is required not only for elongation of protein synthesis but also for the initiation of all mRNA translation through initiator tRNA(fMet) aminoacylation. In Pectobacterium atrosepticum (strain SCRI 1043 / ATCC BAA-672) (Erwinia carotovora subsp. atroseptica), this protein is Methionine--tRNA ligase.